The primary structure comprises 185 residues: Ribosome-recycling factor (185 aa).

The protein belongs to the RRF family.

It is found in the cytoplasm. Functionally, responsible for the release of ribosomes from messenger RNA at the termination of protein biosynthesis. May increase the efficiency of translation by recycling ribosomes from one round of translation to another. This chain is Ribosome-recycling factor, found in Sodalis glossinidius (strain morsitans).